Reading from the N-terminus, the 363-residue chain is Protein RecA (363 aa).

An ATP-binding site is contributed by Gly79 to Thr86.

This sequence belongs to the RecA family.

The protein resides in the cytoplasm. Functionally, can catalyze the hydrolysis of ATP in the presence of single-stranded DNA, the ATP-dependent uptake of single-stranded DNA by duplex DNA, and the ATP-dependent hybridization of homologous single-stranded DNAs. It interacts with LexA causing its activation and leading to its autocatalytic cleavage. The protein is Protein RecA of Methylobacterium sp. (strain 4-46).